The following is a 324-amino-acid chain: Acetyl-coenzyme A carboxylase carboxyl transferase subunit beta (324 aa).

Residues 28–297 enclose the CoA carboxyltransferase N-terminal domain; the sequence is LWCKCPSCNA…AVAPAAAKAP (270 aa). Residues Cys32, Cys35, Cys51, and Cys54 each contribute to the Zn(2+) site. Residues 32–54 form a C4-type zinc finger; that stretch reads CPSCNAILYKSEVERNLEVCPKC.

This sequence belongs to the AccD/PCCB family. As to quaternary structure, acetyl-CoA carboxylase is a heterohexamer composed of biotin carboxyl carrier protein (AccB), biotin carboxylase (AccC) and two subunits each of ACCase subunit alpha (AccA) and ACCase subunit beta (AccD). Zn(2+) serves as cofactor.

It is found in the cytoplasm. It catalyses the reaction N(6)-carboxybiotinyl-L-lysyl-[protein] + acetyl-CoA = N(6)-biotinyl-L-lysyl-[protein] + malonyl-CoA. Its pathway is lipid metabolism; malonyl-CoA biosynthesis; malonyl-CoA from acetyl-CoA: step 1/1. In terms of biological role, component of the acetyl coenzyme A carboxylase (ACC) complex. Biotin carboxylase (BC) catalyzes the carboxylation of biotin on its carrier protein (BCCP) and then the CO(2) group is transferred by the transcarboxylase to acetyl-CoA to form malonyl-CoA. The sequence is that of Acetyl-coenzyme A carboxylase carboxyl transferase subunit beta from Methylococcus capsulatus (strain ATCC 33009 / NCIMB 11132 / Bath).